Consider the following 162-residue polypeptide: MSDRRPDRGRHQARKRAVDLLFEAEARGLTAAEVATSRNKLAGTQPDVTALNPYTVTVARGVTDHRDHIDDLISAHLQGWTLDRLPAVDRAILRVAVWELLHAEDVPEPVAVDEAVELAKQLSTDDSPGFVNGVLGQVMLVTPQIRAASQAVRESAQGPSEG.

This sequence belongs to the NusB family.

In terms of biological role, involved in transcription antitermination. Required for transcription of ribosomal RNA (rRNA) genes. Binds specifically to the boxA antiterminator sequence of the ribosomal RNA (rrn) operons. In Mycobacterium sp. (strain JLS), this protein is Transcription antitermination protein NusB.